The following is a 313-amino-acid chain: HPr kinase/phosphorylase (313 aa).

Catalysis depends on residues His140 and Lys161. 155-162 lines the ATP pocket; that stretch reads GDSGVGKS. Residue Ser162 coordinates Mg(2+). The Proton acceptor; for phosphorylation activity. Proton donor; for dephosphorylation activity role is filled by Asp179. The important for the catalytic mechanism of both phosphorylation and dephosphorylation stretch occupies residues 203-212; the sequence is LEIRGIGIID. Glu204 is a Mg(2+) binding site. Arg245 is a catalytic residue. Residues 266-271 are important for the catalytic mechanism of dephosphorylation; that stretch reads PVKVGR.

Belongs to the HPrK/P family. Homohexamer. The cofactor is Mg(2+).

It carries out the reaction [HPr protein]-L-serine + ATP = [HPr protein]-O-phospho-L-serine + ADP + H(+). The enzyme catalyses [HPr protein]-O-phospho-L-serine + phosphate + H(+) = [HPr protein]-L-serine + diphosphate. In terms of biological role, catalyzes the ATP- as well as the pyrophosphate-dependent phosphorylation of a specific serine residue in HPr, a phosphocarrier protein of the phosphoenolpyruvate-dependent sugar phosphotransferase system (PTS). HprK/P also catalyzes the pyrophosphate-producing, inorganic phosphate-dependent dephosphorylation (phosphorolysis) of seryl-phosphorylated HPr (P-Ser-HPr). The two antagonistic activities of HprK/P are regulated by several intracellular metabolites, which change their concentration in response to the absence or presence of rapidly metabolisable carbon sources (glucose, fructose, etc.) in the growth medium. Therefore, by controlling the phosphorylation state of HPr, HPrK/P is a sensor enzyme that plays a major role in the regulation of carbon metabolism and sugar transport: it mediates carbon catabolite repression (CCR), and regulates PTS-catalyzed carbohydrate uptake and inducer exclusion. In Latilactobacillus sakei subsp. sakei (strain 23K) (Lactobacillus sakei subsp. sakei), this protein is HPr kinase/phosphorylase.